Reading from the N-terminus, the 254-residue chain is 3-deoxy-manno-octulosonate cytidylyltransferase (254 aa).

It belongs to the KdsB family.

It localises to the cytoplasm. It carries out the reaction 3-deoxy-alpha-D-manno-oct-2-ulosonate + CTP = CMP-3-deoxy-beta-D-manno-octulosonate + diphosphate. It participates in nucleotide-sugar biosynthesis; CMP-3-deoxy-D-manno-octulosonate biosynthesis; CMP-3-deoxy-D-manno-octulosonate from 3-deoxy-D-manno-octulosonate and CTP: step 1/1. It functions in the pathway bacterial outer membrane biogenesis; lipopolysaccharide biosynthesis. Functionally, activates KDO (a required 8-carbon sugar) for incorporation into bacterial lipopolysaccharide in Gram-negative bacteria. This Pseudomonas aeruginosa (strain ATCC 15692 / DSM 22644 / CIP 104116 / JCM 14847 / LMG 12228 / 1C / PRS 101 / PAO1) protein is 3-deoxy-manno-octulosonate cytidylyltransferase.